Consider the following 264-residue polypeptide: Ubiquinone biosynthesis protein COQ4 homolog, mitochondrial (264 aa).

Residues methionine 1–threonine 26 constitute a mitochondrion transit peptide. Zn(2+) is bound by residues histidine 169, aspartate 170, histidine 173, and glutamate 185.

It belongs to the COQ4 family. As to quaternary structure, component of a multi-subunit COQ enzyme complex. Requires Zn(2+) as cofactor.

Its subcellular location is the mitochondrion inner membrane. The catalysed reaction is a 4-hydroxy-3-methoxy-5-(all-trans-polyprenyl)benzoate + H(+) = a 2-methoxy-6-(all-trans-polyprenyl)phenol + CO2. Its pathway is cofactor biosynthesis; ubiquinone biosynthesis. Its function is as follows. Lyase that catalyzes the C1-decarboxylation of 4-hydroxy-3-methoxy-5-(all-trans-polyprenyl)benzoic acid into 2-methoxy-6-(all-trans-polyprenyl)phenol during ubiquinone biosynthesis. The polypeptide is Ubiquinone biosynthesis protein COQ4 homolog, mitochondrial (Drosophila grimshawi (Hawaiian fruit fly)).